We begin with the raw amino-acid sequence, 383 residues long: Alkanesulfonate monooxygenase (383 aa).

Belongs to the SsuD family. Homotetramer.

It carries out the reaction an alkanesulfonate + FMNH2 + O2 = an aldehyde + FMN + sulfite + H2O + 2 H(+). Catalyzes the desulfonation of aliphatic sulfonates. The sequence is that of Alkanesulfonate monooxygenase from Erwinia pyrifoliae (strain DSM 12163 / CIP 106111 / Ep16/96).